Reading from the N-terminus, the 389-residue chain is Nicotinate phosphoribosyltransferase (389 aa).

His216 carries the phosphohistidine; by autocatalysis modification.

Belongs to the NAPRTase family. Transiently phosphorylated on a His residue during the reaction cycle. Phosphorylation strongly increases the affinity for substrates and increases the rate of nicotinate D-ribonucleotide production. Dephosphorylation regenerates the low-affinity form of the enzyme, leading to product release.

It carries out the reaction nicotinate + 5-phospho-alpha-D-ribose 1-diphosphate + ATP + H2O = nicotinate beta-D-ribonucleotide + ADP + phosphate + diphosphate. The protein operates within cofactor biosynthesis; NAD(+) biosynthesis; nicotinate D-ribonucleotide from nicotinate: step 1/1. Its function is as follows. Catalyzes the synthesis of beta-nicotinate D-ribonucleotide from nicotinate and 5-phospho-D-ribose 1-phosphate at the expense of ATP. The chain is Nicotinate phosphoribosyltransferase from Ralstonia nicotianae (strain ATCC BAA-1114 / GMI1000) (Ralstonia solanacearum).